Here is a 253-residue protein sequence, read N- to C-terminus: Triosephosphate isomerase (253 aa).

Residue 9–11 coordinates substrate; the sequence is NWK. His-95 functions as the Electrophile in the catalytic mechanism. Glu-167 serves as the catalytic Proton acceptor. Residues Gly-173, Ser-213, and 234–235 contribute to the substrate site; that span reads GG. A Phosphoserine modification is found at Ser-213.

The protein belongs to the triosephosphate isomerase family. Homodimer.

Its subcellular location is the cytoplasm. The enzyme catalyses D-glyceraldehyde 3-phosphate = dihydroxyacetone phosphate. Its pathway is carbohydrate biosynthesis; gluconeogenesis. It functions in the pathway carbohydrate degradation; glycolysis; D-glyceraldehyde 3-phosphate from glycerone phosphate: step 1/1. Functionally, involved in the gluconeogenesis. Catalyzes stereospecifically the conversion of dihydroxyacetone phosphate (DHAP) to D-glyceraldehyde-3-phosphate (G3P). In Bacillus licheniformis (strain ATCC 14580 / DSM 13 / JCM 2505 / CCUG 7422 / NBRC 12200 / NCIMB 9375 / NCTC 10341 / NRRL NRS-1264 / Gibson 46), this protein is Triosephosphate isomerase.